Here is a 145-residue protein sequence, read N- to C-terminus: MKRPSSHGRRPPQGPSQRQLRAGELVRHALVEIFREEEINDPVLAGVSVTVTEVRVSPDLRHATVFVEPLGGEHADEVVQALNRHARFLRGHLGRAIELRFTPELKFLHDESFNEAARMAKLFDDPKVRQDLTPQPPSDSWKDED.

A compositionally biased stretch (basic residues) spans 1–10 (MKRPSSHGRR). Disordered regions lie at residues 1-21 (MKRPSSHGRRPPQGPSQRQLR) and 124-145 (DDPKVRQDLTPQPPSDSWKDED).

Belongs to the RbfA family. In terms of assembly, monomer. Binds 30S ribosomal subunits, but not 50S ribosomal subunits or 70S ribosomes.

Its subcellular location is the cytoplasm. One of several proteins that assist in the late maturation steps of the functional core of the 30S ribosomal subunit. Associates with free 30S ribosomal subunits (but not with 30S subunits that are part of 70S ribosomes or polysomes). Required for efficient processing of 16S rRNA. May interact with the 5'-terminal helix region of 16S rRNA. The sequence is that of Ribosome-binding factor A from Phenylobacterium zucineum (strain HLK1).